The chain runs to 467 residues: MRLYDTLSGGVRDFAPLRPGHVSIYLCGATVQGLPHIGHVRSGVAFDVLRRWLTAKGFDVAFIRNVTDIDDKILIKAADAGRPWWEWAATYERAFTAAYDALGVLPPSAEPRATGHITQMVELIDRLIERGHAYCADQEGNGDVYFSVSTLPEYGKLSGHRIDDVHQGEGVATGKRDQRDFTLWKGAKPGEPSWPTPWGRGRPGWHTECVAMCEAYLGAEFDIHAGGMDLVFPHHENEIAQAEAAGDGFARFWLHNGWVTMGGEKMSKSLGNVLAIPAVLQRVRAAELRYYLGSAHYRSMLEFSENALQDAARAYSGVEDFLHRVRVRVGAVVPGEWTPKFGAALDDDLAVPAALAEVHAARAEGNRALDAGDHDAALTYAMSIRAMMGILGADPLDERWESRDKTSAALAAVDVLVHAEVRRREDARARRDWAEADAIRDRLKEAGIEVTDTGDGPQWSLLDGTDK.

Residue C27 participates in Zn(2+) binding. Positions 29-39 (ATVQGLPHIGH) match the 'HIGH' region motif. Residues C209, H234, and E238 each coordinate Zn(2+). Residues 265–269 (KMSKS) carry the 'KMSKS' region motif. K268 provides a ligand contact to ATP.

It belongs to the class-I aminoacyl-tRNA synthetase family. As to quaternary structure, monomer. Requires Zn(2+) as cofactor.

The protein localises to the cytoplasm. It catalyses the reaction tRNA(Cys) + L-cysteine + ATP = L-cysteinyl-tRNA(Cys) + AMP + diphosphate. This chain is Cysteine--tRNA ligase, found in Mycolicibacterium gilvum (strain PYR-GCK) (Mycobacterium gilvum (strain PYR-GCK)).